The sequence spans 582 residues: Hemagglutinin-neuraminidase (582 aa).

The helical transmembrane segment at 35–55 (ILVLSVQAVTLILVIVTLGEL) threads the bilayer. Disulfide bonds link Cys-178-Cys-202, Cys-192-Cys-253, and Cys-244-Cys-257. 2 N-linked (GlcNAc...) asparagine; by host glycosylation sites follow: Asn-284 and Asn-329. 3 disulfides stabilise this stretch: Cys-350-Cys-471, Cys-382-Cys-392, and Cys-465-Cys-475. N-linked (GlcNAc...) asparagine; by host glycans are attached at residues Asn-400 and Asn-448. Asn-507 is a glycosylation site (N-linked (GlcNAc...) asparagine; by host). The cysteines at positions 545 and 556 are disulfide-linked.

The protein belongs to the paramyxoviruses hemagglutinin-neuraminidase family. In terms of assembly, homodimer. Further forms homotetramer (dimer of dimers). Interacts with F protein trimer.

Its subcellular location is the virion membrane. It is found in the host cell membrane. The enzyme catalyses Hydrolysis of alpha-(2-&gt;3)-, alpha-(2-&gt;6)-, alpha-(2-&gt;8)- glycosidic linkages of terminal sialic acid residues in oligosaccharides, glycoproteins, glycolipids, colominic acid and synthetic substrates.. Attaches the virus to alpha-2,3-linked sialic acid-containing cell receptors and thereby initiating infection. Binding of HN protein to the receptor induces a conformational change that allows the F protein to trigger virion/cell membranes fusion. Binds to the glycan motifs sialyl Lewis (SLe) and GM2 ganglioside (GM2-glycan). Its function is as follows. Neuraminidase activity ensures the efficient spread of the virus by dissociating the mature virions from the neuraminic acid containing glycoproteins. This is Hemagglutinin-neuraminidase (HN) from Homo sapiens (Human).